Reading from the N-terminus, the 267-residue chain is Tryptophan synthase alpha chain (267 aa).

Residues E49 and D60 each act as proton acceptor in the active site.

The protein belongs to the TrpA family. In terms of assembly, tetramer of two alpha and two beta chains.

The catalysed reaction is (1S,2R)-1-C-(indol-3-yl)glycerol 3-phosphate + L-serine = D-glyceraldehyde 3-phosphate + L-tryptophan + H2O. It participates in amino-acid biosynthesis; L-tryptophan biosynthesis; L-tryptophan from chorismate: step 5/5. Functionally, the alpha subunit is responsible for the aldol cleavage of indoleglycerol phosphate to indole and glyceraldehyde 3-phosphate. This Pelobacter propionicus (strain DSM 2379 / NBRC 103807 / OttBd1) protein is Tryptophan synthase alpha chain.